Consider the following 624-residue polypeptide: Adenine deaminase 1 (624 aa).

It belongs to the metallo-dependent hydrolases superfamily. Adenine deaminase family. Mn(2+) is required as a cofactor.

The catalysed reaction is adenine + H2O + H(+) = hypoxanthine + NH4(+). This is Adenine deaminase 1 from Bradyrhizobium sp. (strain ORS 278).